The sequence spans 275 residues: 4-diphosphocytidyl-2-C-methyl-D-erythritol kinase (275 aa).

The active site involves Lys-8. 86-96 (PEGAGLGGGSS) is a binding site for ATP. Asp-125 is a catalytic residue.

It belongs to the GHMP kinase family. IspE subfamily.

It catalyses the reaction 4-CDP-2-C-methyl-D-erythritol + ATP = 4-CDP-2-C-methyl-D-erythritol 2-phosphate + ADP + H(+). It functions in the pathway isoprenoid biosynthesis; isopentenyl diphosphate biosynthesis via DXP pathway; isopentenyl diphosphate from 1-deoxy-D-xylulose 5-phosphate: step 3/6. In terms of biological role, catalyzes the phosphorylation of the position 2 hydroxy group of 4-diphosphocytidyl-2C-methyl-D-erythritol. The chain is 4-diphosphocytidyl-2-C-methyl-D-erythritol kinase from Thermus thermophilus (strain ATCC BAA-163 / DSM 7039 / HB27).